We begin with the raw amino-acid sequence, 1493 residues long: Protein Shroom4 (1493 aa).

The 83-residue stretch at 10–92 folds into the PDZ domain; sequence YVPVQLQGGA…ILKLIVRRRN (83 aa). Residues 202-282 form a disordered region; sequence CALSLRPEEP…PPQPPVRRDS (81 aa). Composition is skewed to polar residues over residues 234 to 243 and 249 to 262; these read AETSGGSRRT and TPSS…QEGY. Phosphoserine is present on Ser-411. The segment at 430–695 is disordered; sequence GSKGMELPPV…SPGQRPGQSS (266 aa). 2 stretches are compositionally biased toward basic and acidic residues: residues 470–484 and 498–509; these read QSSK…DDRS and GEADGHPSEKGF. Over residues 513-547 the composition is skewed to polar residues; that stretch reads NRTSRAASELANQQPSASGSLVQQATDCSSTTKAA. Position 729 is a phosphoserine (Ser-729). 2 disordered regions span residues 740–759 and 781–813; these read AAME…ASTA and SKSL…NFQP. Positions 782–802 are enriched in polar residues; the sequence is KSLSTSHLPGLTTHSNKTFTQ. At Ser-1019 the chain carries Phosphoserine. 4 disordered regions span residues 1117 to 1170, 1187 to 1206, 1214 to 1236, and 1246 to 1265; these read AAQQ…ETSG, SFGH…AEQE, DFLP…PCYY, and GQEA…PPSG. Low complexity predominate over residues 1118–1129; the sequence is AQQQKQQQQQQK. The segment covering 1132 to 1159 has biased composition (acidic residues); the sequence is EEEEEEEEEEEEEEEEEEEEAEEEEEEL. The 280-residue stretch at 1213–1492 folds into the ASD2 domain; it reads SDFLPPIRGH…RESLLLGPSN (280 aa). The stretch at 1382–1488 forms a coiled coil; that stretch reads LSGRLARVEN…LKCLRESLLL (107 aa).

The protein belongs to the shroom family. As to quaternary structure, interacts directly with F-actin. As to expression, expressed in all fetal and adult tissues investigated. Expressed in adult heart, brain, placenta, lung, liver, skeletal muscle, kidney and pancreas. In brain regions detected in cerebellum, cerebral cortex, medulla, spinal cord, occipital pole, frontal lobe, temporal lobe and putamen. The expression is strongest in the medulla and weakest in the cerebral cortex.

The protein resides in the cytoplasm. The protein localises to the cytoskeleton. In terms of biological role, probable regulator of cytoskeletal architecture that plays an important role in development. May regulate cellular and cytoskeletal architecture by modulating the spatial distribution of myosin II. This chain is Protein Shroom4 (SHROOM4), found in Homo sapiens (Human).